The primary structure comprises 231 residues: Transmembrane gamma-carboxyglutamic acid protein 3 (231 aa).

A propeptide spanning residues 1–19 (MAVFLEAKNAHAVLKRFPR) is cleaved from the precursor. A Gla domain is found at 20 to 65 (ANEFLEELRQGTIERECMEEICSYEEVKEVFENKEKTMEFWKGYPN). Residues 20–78 (ANEFLEELRQGTIERECMEEICSYEEVKEVFENKEKTMEFWKGYPNAVYSVRDPSQSSD) are Extracellular-facing. Glutamate 22, glutamate 25, glutamate 26, glutamate 33, glutamate 35, glutamate 38, glutamate 39, glutamate 44, glutamate 45, glutamate 48, glutamate 51, glutamate 54, and glutamate 58 each carry 4-carboxyglutamate. Cysteine 36 and cysteine 41 are oxidised to a cystine. A helical membrane pass occupies residues 79-101 (AMYVVVPLLGVVLLIVIALFIIW). Residues 102-231 (RCQLQKATRH…IVAASPSADK (130 aa)) lie on the Cytoplasmic side of the membrane. Disordered stretches follow at residues 140-165 (HSQGESSGHREAGNNPQIVMGPSRGG) and 184-231 (RLSS…SADK). The span at 201 to 212 (QEGSSEEASVSY) shows a compositional bias: polar residues.

Gla residues are produced after subsequent post-translational modifications of glutamate by a vitamin K-dependent gamma-carboxylase.

It is found in the membrane. This is Transmembrane gamma-carboxyglutamic acid protein 3 (Prrg3) from Mus musculus (Mouse).